The following is a 417-amino-acid chain: Probable pectate lyase 20 (417 aa).

The first 25 residues, 1-25 (MAVTQILVVFASALLLSMFFTGVDS), serve as a signal peptide directing secretion. Asn29 and Asn53 each carry an N-linked (GlcNAc...) asparagine glycan. 3 residues coordinate Ca(2+): Asp215, Asp239, and Asp243. Arg295 is an active-site residue.

The protein belongs to the polysaccharide lyase 1 family. Ca(2+) is required as a cofactor.

It carries out the reaction Eliminative cleavage of (1-&gt;4)-alpha-D-galacturonan to give oligosaccharides with 4-deoxy-alpha-D-galact-4-enuronosyl groups at their non-reducing ends.. The protein operates within glycan metabolism; pectin degradation; 2-dehydro-3-deoxy-D-gluconate from pectin: step 2/5. This Arabidopsis thaliana (Mouse-ear cress) protein is Probable pectate lyase 20.